Consider the following 326-residue polypeptide: Beta-ketoacyl-[acyl-carrier-protein] synthase III (326 aa).

Active-site residues include C112 and H251. Residues 252-256 are ACP-binding; sequence QANSR. N281 is a catalytic residue.

Belongs to the thiolase-like superfamily. FabH family. As to quaternary structure, homodimer.

Its subcellular location is the cytoplasm. The enzyme catalyses malonyl-[ACP] + acetyl-CoA + H(+) = 3-oxobutanoyl-[ACP] + CO2 + CoA. The protein operates within lipid metabolism; fatty acid biosynthesis. Its function is as follows. Catalyzes the condensation reaction of fatty acid synthesis by the addition to an acyl acceptor of two carbons from malonyl-ACP. Catalyzes the first condensation reaction which initiates fatty acid synthesis and may therefore play a role in governing the total rate of fatty acid production. Possesses both acetoacetyl-ACP synthase and acetyl transacylase activities. Its substrate specificity determines the biosynthesis of branched-chain and/or straight-chain of fatty acids. The protein is Beta-ketoacyl-[acyl-carrier-protein] synthase III of Clostridium botulinum (strain ATCC 19397 / Type A).